The chain runs to 313 residues: Protein TIFY 4A (313 aa).

A disordered region spans residues 118–149 (SPRSAEFSGGSGHFVSEKDGHKTTISPRSPAE). A Tify domain is found at 150–185 (TSELVGQMTIFYSGKVNVYDGIPPEKARSIMHFAAN). Disordered regions lie at residues 220–256 (KANS…KAKK) and 281–313 (QNLG…SEGI). Positions 232–254 (QANRKVSLQRYREKRKDRKFSKA) match the Jas motif. Positions 234–241 (NRKVSLQR) match the Nuclear localization signal motif. Basic residues predominate over residues 243–256 (REKRKDRKFSKAKK).

This sequence belongs to the TIFY/JAZ family. As to quaternary structure, interacts with AFPH2/NINJA.

It localises to the nucleus. Functionally, regulates the arrest of dispersed meristematic cells during lamina development. This is Protein TIFY 4A (TIFY4A) from Arabidopsis thaliana (Mouse-ear cress).